Consider the following 1009-residue polypeptide: Lateral signaling target protein 2 homolog (1009 aa).

Disordered stretches follow at residues 313–460 (PVGS…EEQL), 497–629 (ASED…KRCS), and 777–905 (MQRN…TATA). 3 stretches are compositionally biased toward low complexity: residues 327–348 (SSTPTTSSNNNNNNKSSSSSSG), 364–398 (QRNNNNNQQNSNESTTLPPRSPSMLSLSASSTPTA), and 406–427 (PSHSIASTTSSAASSNSTHPPA). Acidic residues predominate over residues 430-458 (SDGDDEDEDEEEDEEEDELEDTEDDTDEE). Phosphoserine is present on serine 541. Residues 544–558 (SEPHRDQGETIKSTE) show a composition bias toward basic and acidic residues. The segment covering 562–575 (QQQQQQEQQTLQSS) has biased composition (low complexity). Basic residues-rich tracts occupy residues 576–601 (RQRHSHSHSHSHRHHHRHHHHHHHST) and 609–627 (QPHHHQPHPHRLTRSGRKR). Over residues 780 to 798 (NNTIDNPSSSNTSSSSATT) the composition is skewed to low complexity. Phosphoserine is present on serine 807. Over residues 822–878 (VHQQEQEMQQQQDHQQQQHQHQVQVQLQRQRNNSVGSNTPSSASSTSSSSEQNSPVS) the composition is skewed to low complexity. The FYVE-type zinc finger occupies 917 to 977 (DGKAPRCMSC…VCRDCYVREV (61 aa)). The Zn(2+) site is built by cysteine 923, cysteine 926, cysteine 939, cysteine 942, cysteine 947, cysteine 950, cysteine 969, and cysteine 972.

The protein belongs to the lst-2 family.

Negative regulator of epidermal growth factor receptor (EGFR) signaling. This is Lateral signaling target protein 2 homolog from Drosophila persimilis (Fruit fly).